A 691-amino-acid polypeptide reads, in one-letter code: Elongation factor G (691 aa).

Positions E8–L283 constitute a tr-type G domain. Residues A17–T24, D81–H85, and N135–D138 each bind GTP.

This sequence belongs to the TRAFAC class translation factor GTPase superfamily. Classic translation factor GTPase family. EF-G/EF-2 subfamily.

The protein resides in the cytoplasm. In terms of biological role, catalyzes the GTP-dependent ribosomal translocation step during translation elongation. During this step, the ribosome changes from the pre-translocational (PRE) to the post-translocational (POST) state as the newly formed A-site-bound peptidyl-tRNA and P-site-bound deacylated tRNA move to the P and E sites, respectively. Catalyzes the coordinated movement of the two tRNA molecules, the mRNA and conformational changes in the ribosome. The protein is Elongation factor G of Parvibaculum lavamentivorans (strain DS-1 / DSM 13023 / NCIMB 13966).